The following is a 661-amino-acid chain: SUMO-activating enzyme subunit 2 (661 aa).

ATP contacts are provided by residues 29–34 (GAGGIG), Asp53, 61–64 (NLNR), Lys77, and 122–127 (DNISAR). Zn(2+) contacts are provided by Cys163 and Cys166. Cys178 (glycyl thioester intermediate) is an active-site residue. Zn(2+)-binding residues include Cys436 and Cys439. A disordered region spans residues 545–661 (KKQQQKEKDQ…SKKLKSNLQD (117 aa)). A compositionally biased stretch (basic and acidic residues) spans 548–563 (QQKEKDQKEGKTTTIE). Low complexity-rich tracts occupy residues 577-607 (TSQT…NNNN) and 623-634 (SSTTTSSATPSI).

It belongs to the ubiquitin-activating E1 family. In terms of assembly, heterodimer of sae1 and sae2. The complex binds sumo via sae2.

The protein localises to the nucleus. It functions in the pathway protein modification; protein sumoylation. Functionally, the dimeric enzyme acts as an E1 ligase for sumo. It mediates ATP-dependent activation of sumo and formation of a thioester with a conserved cysteine residue on sae2. The chain is SUMO-activating enzyme subunit 2 (uba2) from Dictyostelium discoideum (Social amoeba).